The sequence spans 253 residues: Triosephosphate isomerase (253 aa).

9-11 (NWK) serves as a coordination point for substrate. The Electrophile role is filled by His98. The active-site Proton acceptor is Glu170. Residues Gly176, Ser216, and 237–238 (GG) each bind substrate.

It belongs to the triosephosphate isomerase family. In terms of assembly, homodimer.

It localises to the cytoplasm. It catalyses the reaction D-glyceraldehyde 3-phosphate = dihydroxyacetone phosphate. It participates in carbohydrate biosynthesis; gluconeogenesis. It functions in the pathway carbohydrate degradation; glycolysis; D-glyceraldehyde 3-phosphate from glycerone phosphate: step 1/1. Functionally, involved in the gluconeogenesis. Catalyzes stereospecifically the conversion of dihydroxyacetone phosphate (DHAP) to D-glyceraldehyde-3-phosphate (G3P). The polypeptide is Triosephosphate isomerase (Amoebophilus asiaticus (strain 5a2)).